The sequence spans 523 residues: Probable endopeptidase p60 (523 aa).

The N-terminal stretch at 1–27 (MNMKKATIAATAGIAVTAFAAPTIASA) is a signal peptide. A LysM 1 domain is found at 28–71 (STVVVEAGDTLWGIAQDNGTTVDALKKANKLTTDKIVPGQKLQV). An SH3b domain is found at 78 to 142 (KTEKSVSATW…VNGKYLGNAV (65 aa)). Residues 146–188 (PSATPEVKQEETTQAAPAQQTKTEVKQATPAATTEKDAVETKT) form a disordered region. Residues 157-167 (TTQAAPAQQTK) show a composition bias toward low complexity. Residues 198 to 241 (TTHTVKSGDTIWALSVKYGASVQDLMSWNNLSSSSIYVGQNIAV) form the LysM 2 domain. Composition is skewed to low complexity over residues 251–282 (PKAE…TTTT) and 290–318 (EKQT…TNAS). Disordered stretches follow at residues 251 to 323 (PKAE…YTVK) and 367 to 408 (ATNT…SSSA). The 44-residue stretch at 318–361 (SSYTVKSGDTLGKIASTFGTTVSKIKALNGLTSDNLQVGDVLKV) folds into the LysM 3 domain. The 119-residue stretch at 405-523 (SSSASAIIAE…GQYLVGFGRV (119 aa)) folds into the NlpC/P60 domain. Cys435 serves as the catalytic Nucleophile. Residue His485 is the Proton acceptor of the active site. Asn497 is a catalytic residue.

It belongs to the peptidase C40 family.

In terms of biological role, this major extracellular protein may be involved in the invasion of non-professional phagocytic cells by Listeria. The polypeptide is Probable endopeptidase p60 (iap) (Listeria seeligeri).